Reading from the N-terminus, the 68-residue chain is Elastase inhibitor AFLEI (68 aa).

Cys-5 and Cys-67 are disulfide-bonded.

Its subcellular location is the secreted. Elastase inhibitor. Inhibitor of A.flavus elastase with a Ki of 40 nM. Inhibitor of A.fumigatus elastase and human leukocyte elastase. Inhibits the fibrinogenase and collagenase activities of A.flavus elastase. Does not inhibit porcine pancreatic elastase, trypsin, chymotrypsin, thrombin or A.acutus AC1-proteinase. The sequence is that of Elastase inhibitor AFLEI from Aspergillus flavus.